The following is a 357-amino-acid chain: MRRRGPEKEEEACGVWLDAAALKRRKTQTQLIKSSTKMLTLLPGERKAKISFTQRSCPSAGTRQTSIASFLTSQQGKTNGADQRSVSSHTESQTNKESKEDATQLEHLTQGLRADFMAPPLATSTPADIQEARLSPQSLKASCQHGIGTPYLTVPCLFRPDTSVCAGASKASLACSFAHDLESSCLLDQKEGEDSSCEREWLQGSKKNNYQSVERHSKTTGHKGHQLLDKTNLENVSAKRSRQAPVLQTYKDSRRGANMKAVKQSSCPIPGFSWDSERNDKDSWSQLFTEDSQGQRVIAHNSRAPFRDVTNDQNQGYGRVPNSLWAQCQDRTTQFNLQPDSLFTQDSEGNQVIRHQA.

The segment covering 72-93 (TSQQGKTNGADQRSVSSHTESQ) has biased composition (polar residues). The tract at residues 72–102 (TSQQGKTNGADQRSVSSHTESQTNKESKEDA) is disordered. Residues 189–357 (QKEGEDSSCE…EGNQVIRHQA (169 aa)) are interaction with AURKA. The segment at 281–357 (KDSWSQLFTE…EGNQVIRHQA (77 aa)) is interaction with RBBP8/CtIP. Ser-292 is modified (phosphoserine).

Belongs to the AUNIP family. In terms of assembly, interacts (via C-terminus) with AURKA (via C-terminus). Interacts (via N-terminus) with NIN; this interaction blocks NIN phosphorylation by both AURKA and GSK3B. Identified in a complex with NIN and AURKA. Interacts with RBBP8/CtIP.

The protein resides in the nucleus. It localises to the chromosome. The protein localises to the cytoplasm. It is found in the cytoskeleton. Its subcellular location is the microtubule organizing center. The protein resides in the centrosome. It localises to the spindle pole. DNA-binding protein that accumulates at DNA double-strand breaks (DSBs) following DNA damage and promotes DNA resection and homologous recombination. Serves as a sensor of DNA damage: binds DNA with a strong preference for DNA substrates that mimic structures generated at stalled replication forks, and anchors RBBP8/CtIP to DSB sites to promote DNA end resection and ensuing homologous recombination repair. Inhibits non-homologous end joining (NHEJ). Required for the dynamic movement of AURKA at the centrosomes and spindle apparatus during the cell cycle. This Bos taurus (Bovine) protein is Aurora kinase A- and ninein-interacting protein.